We begin with the raw amino-acid sequence, 156 residues long: Mitochondrial intermembrane space cysteine motif-containing protein MIX17 (156 aa).

The transit peptide at 1 to 21 directs the protein to the mitochondrion; sequence MARSRGSSRPISRSRPTQTRS. Residues 1 to 21 are compositionally biased toward low complexity; sequence MARSRGSSRPISRSRPTQTRS. 2 disordered regions span residues 1–50 and 78–110; these read MARS…GAQT and AGITGMFSGSGSDSAPVEQQQQNMANTSGQTQT. The segment covering 84-110 has biased composition (polar residues); it reads FSGSGSDSAPVEQQQQNMANTSGQTQT. Residues 115-156 form the CHCH domain; it reads GRTCEIDARNFTRCLDENNGNFQICDYYLQQLKACQEAARQY. The Cx9C motif motif lies at 118-128; it reads CEIDARNFTRC. 2 cysteine pairs are disulfide-bonded: C118–C149 and C128–C139.

The protein localises to the mitochondrion intermembrane space. The sequence is that of Mitochondrial intermembrane space cysteine motif-containing protein MIX17 (MIX17) from Saccharomyces cerevisiae (strain ATCC 204508 / S288c) (Baker's yeast).